The chain runs to 647 residues: Carboxypeptidase Z (647 aa).

An N-terminal signal peptide occupies residues 1-18 (MVPSLLLLLTGLFRATEP). Positions 35-157 (AQKAKCVDIS…AGEEEGCFDP (123 aa)) constitute an FZ domain. 5 disulfide bridges follow: cysteine 40–cysteine 106, cysteine 48–cysteine 99, cysteine 90–cysteine 126, cysteine 115–cysteine 154, and cysteine 119–cysteine 143. Positions 183–499 (KHHSYSQMVS…DALLNYMEMV (317 aa)) constitute a Peptidase M14 domain. Histidine 245 and glutamate 248 together coordinate Zn(2+). Asparagine 278 carries N-linked (GlcNAc...) asparagine glycosylation. Histidine 377 contacts Zn(2+). Catalysis depends on glutamate 469, which acts as the Proton donor/acceptor.

This sequence belongs to the peptidase M14 family. As to quaternary structure, interacts with WNT4 vie its FZ domain. Zn(2+) serves as cofactor. In the early embryo it is initially expressed throughout the somites and subsequently becomes restricted to the sclerotome. Expressed in somites, paraxial head mesoderm and apical ectodermal ridge.

It localises to the secreted. The protein localises to the extracellular space. It is found in the extracellular matrix. With respect to regulation, inhibited by 2-mercaptomethyl-3-guanidinoethylthiopropanoic acid (MGTA) and guanidinoethylmercaptosuccinic acid (GEMSA). Inhibited by chelating agents such as EDTA and EGTA. Its function is as follows. Cleaves substrates with C-terminal arginine residues. Modulates the Wnt signaling pathway, probably by cleaving some undefined protein. Regulates the development of skeletal elements during development, probably by activating WNT4. This Gallus gallus (Chicken) protein is Carboxypeptidase Z (CPZ).